Consider the following 323-residue polypeptide: Aquaporin NIP3-1 (323 aa).

Position 1 is an N-acetylmethionine (M1). The next 2 helical transmembrane spans lie at 45–65 (LIGEFVGTFTMIFAGCSAIVV) and 73–93 (VTLPGIALVWGLVVTVMIYSI). The short motif at 102–104 (NPA) is the NPA 1 element. 3 consecutive transmembrane segments (helical) span residues 122–142 (GYIAAQLLGSTLAAAVLRLVF), 167–187 (TSFVMEFIATFNLMFVISAVA), and 196–216 (FAGIAIGATIVLDILFSGPIS). Positions 221–223 (NPA) match the NPA 2 motif. The helical transmembrane segment at 239–259 (WLYIVSPVIGALSGAWTYGLL) threads the bilayer.

The protein belongs to the MIP/aquaporin (TC 1.A.8) family. NIP (TC 1.A.8.12) subfamily.

It localises to the membrane. Aquaporins facilitate the transport of water and small neutral solutes across cell membranes. The polypeptide is Aquaporin NIP3-1 (NIP3-1) (Arabidopsis thaliana (Mouse-ear cress)).